Consider the following 361-residue polypeptide: Hydroxyproline O-arabinosyltransferase PLENTY (361 aa).

Residues 13–33 (LLMLLMVLGFFFATYNLVSMI) form a helical; Signal-anchor membrane-spanning segment.

Its subcellular location is the golgi apparatus membrane. The catalysed reaction is trans-4-hydroxy-L-prolyl-[protein] + UDP-beta-L-arabinofuranose = O-(beta-L-arabinofuranosyl)-trans-4-hydroxy-L-prolyl-[protein] + UDP + H(+). Functionally, glycosyltransferase involved in the O-arabinosylation of several proteins including extensins and small signaling peptides. Catalyzes the transfer of the initial L-arabinose to the hydroxyl group of Hyp residues. Probably involved in the arabinosylation of CLAVATA3/ESR-related (CLE) signaling peptides that move from root to shoot, to interact with receptor kinase signaling that regulates nodulation. Involved in long distance nodulation signaling events. Involved in the autoregulation of nodulation (AON), a long distance systemic signaling from root to shoot and back again, which allows legumes to limit the number of root nodules formed based on available nitrogen and previous rhizobial colonization. This is Hydroxyproline O-arabinosyltransferase PLENTY from Lotus japonicus (Lotus corniculatus var. japonicus).